The following is a 167-amino-acid chain: Putative defense protein Hdd11-like (167 aa).

An N-terminal signal peptide occupies residues 1 to 18 (MMFTYVVAVASVVALTSA). The 149-residue stretch at 19-167 (YPTGAPPSAC…ESAPVKVLSH (149 aa)) folds into the Reelin domain. An intrachain disulfide couples cysteine 28 to cysteine 105.

It belongs to the insect defense protein family. As to expression, in larvae, high expression in the fat body and low expression in midgut, hemocytes and malpighian tubules. No expression in silkgland.

It localises to the secreted. May have antimicrobial activity. In Samia ricini (Indian eri silkmoth), this protein is Putative defense protein Hdd11-like.